Reading from the N-terminus, the 123-residue chain is Small ribosomal subunit protein uS12 (123 aa).

A 3-methylthioaspartic acid modification is found at Asp89. Residues Leu102–Lys123 form a disordered region. Over residues Arg111–Lys123 the composition is skewed to basic residues.

Belongs to the universal ribosomal protein uS12 family. Part of the 30S ribosomal subunit. Contacts proteins S8 and S17. May interact with IF1 in the 30S initiation complex.

With S4 and S5 plays an important role in translational accuracy. Functionally, interacts with and stabilizes bases of the 16S rRNA that are involved in tRNA selection in the A site and with the mRNA backbone. Located at the interface of the 30S and 50S subunits, it traverses the body of the 30S subunit contacting proteins on the other side and probably holding the rRNA structure together. The combined cluster of proteins S8, S12 and S17 appears to hold together the shoulder and platform of the 30S subunit. This is Small ribosomal subunit protein uS12 from Lawsonia intracellularis (strain PHE/MN1-00).